Consider the following 1415-residue polypeptide: DNA-directed RNA polymerase subunit beta'' (1415 aa).

Positions 217, 291, 298, and 301 each coordinate Zn(2+).

The protein belongs to the RNA polymerase beta' chain family. RpoC2 subfamily. In terms of assembly, in plastids the minimal PEP RNA polymerase catalytic core is composed of four subunits: alpha, beta, beta', and beta''. When a (nuclear-encoded) sigma factor is associated with the core the holoenzyme is formed, which can initiate transcription. It depends on Zn(2+) as a cofactor.

The protein localises to the plastid. Its subcellular location is the chloroplast. It catalyses the reaction RNA(n) + a ribonucleoside 5'-triphosphate = RNA(n+1) + diphosphate. DNA-dependent RNA polymerase catalyzes the transcription of DNA into RNA using the four ribonucleoside triphosphates as substrates. The sequence is that of DNA-directed RNA polymerase subunit beta'' from Phaeodactylum tricornutum (strain CCAP 1055/1).